A 287-amino-acid polypeptide reads, in one-letter code: ATP synthase gamma chain (287 aa).

This sequence belongs to the ATPase gamma chain family. In terms of assembly, F-type ATPases have 2 components, CF(1) - the catalytic core - and CF(0) - the membrane proton channel. CF(1) has five subunits: alpha(3), beta(3), gamma(1), delta(1), epsilon(1). CF(0) has three main subunits: a, b and c.

Its subcellular location is the cell inner membrane. In terms of biological role, produces ATP from ADP in the presence of a proton gradient across the membrane. The gamma chain is believed to be important in regulating ATPase activity and the flow of protons through the CF(0) complex. In Geobacter metallireducens (strain ATCC 53774 / DSM 7210 / GS-15), this protein is ATP synthase gamma chain.